Consider the following 433-residue polypeptide: Legumain (433 aa).

A signal peptide spans 1–17; that stretch reads MVWKVAVFLSVALGIGA. N91 carries an N-linked (GlcNAc...) asparagine glycan. Residue H148 is part of the active site. Residue N167 is glycosylated (N-linked (GlcNAc...) asparagine). The active-site Nucleophile is the C189. N263 and N272 each carry an N-linked (GlcNAc...) asparagine glycan. A propeptide spanning residues 324-433 is cleaved from the precursor; that stretch reads DLEESRQLTE…SMDHVCLGHY (110 aa). Intrachain disulfides connect C378–C412 and C390–C429.

It belongs to the peptidase C13 family. In terms of assembly, homodimer before autocatalytic removal of the propeptide. Monomer after autocatalytic processing. May interact with integrins. Activated by autocatalytic processing at pH 4. In terms of tissue distribution, ubiquitous. Particularly abundant in kidney, heart and placenta.

The protein localises to the lysosome. The catalysed reaction is Hydrolysis of proteins and small molecule substrates at -Asn-|-Xaa- bonds.. With respect to regulation, inhibited by CST6. Its function is as follows. Has a strict specificity for hydrolysis of asparaginyl bonds. Can also cleave aspartyl bonds slowly, especially under acidic conditions. Involved in the processing of proteins for MHC class II antigen presentation in the lysosomal/endosomal system. Also involved in MHC class I antigen presentation in cross-presenting dendritic cells by mediating cleavage and maturation of Perforin-2 (MPEG1), thereby promoting antigen translocation in the cytosol. Required for normal lysosomal protein degradation in renal proximal tubules. Required for normal degradation of internalized EGFR. Plays a role in the regulation of cell proliferation via its role in EGFR degradation. This Homo sapiens (Human) protein is Legumain.